The following is a 430-amino-acid chain: Small ribosomal subunit protein uS9m (430 aa).

The N-terminal 34 residues, 1–34, are a transit peptide targeting the mitochondrion; that stretch reads MLSRLFLRHSNLRFVTLVSSKSNSQIFSSFIRPL. Residues 32–97 form a disordered region; sequence RPLSTNSSGG…GGEGKWPEEP (66 aa). Gly residues predominate over residues 39–48; it reads SGGGGNGDGN. Residues 68–79 show a composition bias toward low complexity; sequence GPFSSDDSFGSS. Positions 80–91 are enriched in gly residues; the sequence is GVAGSGLPGGEG.

Belongs to the universal ribosomal protein uS9 family. In terms of assembly, interacts (via C terminus) with PIA2. Component of the mitochondrial ribosome small subunit. Expressed in root tips, young leaves, flowers and siliques.

The protein localises to the mitochondrion. Its function is as follows. Mitochondrial ribosomal protein required for central cell maturation. May work together with PIA2 in controlling female gametophyte development, possibly by regulating the expression of some mitochondrial proteins. This is Small ribosomal subunit protein uS9m from Arabidopsis thaliana (Mouse-ear cress).